The sequence spans 840 residues: Putative pentatricopeptide repeat-containing protein At1g31840 (840 aa).

PPR repeat units follow at residues 98-128 (KDPS…MITN), 145-179 (DADV…GVVI), 180-214 (PQDS…GIEP), 216-250 (GVSA…GFRV), 251-284 (GIVS…GPAP), 285-319 (NVVT…GIEP), 320-354 (DLIA…GVKL), 355-389 (DVVV…GISP), 390-424 (NVVT…GMEP), 425-459 (SIVT…GYPP), 460-494 (DVVI…SIRL), 495-529 (NVVV…GIKP), 530-564 (DVAT…GLEP), 565-599 (DALA…KISA), 600-634 (DIAV…KMEP), 635-669 (DIVT…PFGP), 670-704 (NTVT…GSKP), 705-739 (NAVT…GISP), 740-774 (SIVS…KLLP), and 775-809 (DVVA…GVKP).

It belongs to the PPR family. P subfamily.

The chain is Putative pentatricopeptide repeat-containing protein At1g31840 from Arabidopsis thaliana (Mouse-ear cress).